The sequence spans 482 residues: uncharacterized protein (482 aa).

The HTH gntR-type domain occupies 12-80; sequence LPKYRQIVHF…MGKGTVVINN (69 aa). The H-T-H motif DNA-binding region spans 40 to 59; sequence QRTLAKDFQVNRSTVITALE. N6-(pyridoxal phosphate)lysine is present on K325.

This sequence in the C-terminal section; belongs to the class-I pyridoxal-phosphate-dependent aminotransferase family. The cofactor is pyridoxal 5'-phosphate.

This is an uncharacterized protein from Bacillus subtilis (strain 168).